The sequence spans 201 residues: UPF0301 protein Mvan_6057 (201 aa).

Belongs to the UPF0301 (AlgH) family.

This Mycolicibacterium vanbaalenii (strain DSM 7251 / JCM 13017 / BCRC 16820 / KCTC 9966 / NRRL B-24157 / PYR-1) (Mycobacterium vanbaalenii) protein is UPF0301 protein Mvan_6057.